Here is a 372-residue protein sequence, read N- to C-terminus: Histidine protein methyltransferase 1 homolog (372 aa).

Disordered regions lie at residues 30–55 (SKEL…QFDL) and 68–103 (NAAP…AKEH). Residues 39–49 (QKGEERDRKCS) are compositionally biased toward basic and acidic residues. Residues 70-87 (APSQDTDSPLSAASSSRN) show a composition bias toward polar residues. Ser-72 and Ser-77 each carry phosphoserine. His-154 bears the Tele-methylhistidine; by autocatalysis mark. S-adenosyl-L-methionine-binding positions include 168 to 172 (IWECT), Gly-195, and 216 to 218 (QDY). A Nuclear localization signal motif is present at residues 247–253 (PDVKRCR). Residues 268–270 (GEW) and Ser-293 contribute to the S-adenosyl-L-methionine site.

Belongs to the methyltransferase superfamily. METTL18 family. Interacts with GRWD1 and members of the heat shock protein 90 and 70 families; these proteins may possibly be methylation substrates for the enzyme. In terms of processing, monomethylated at His-154 through automethylation. Automethylation at His-154 positively regulates the methyltransferase activity toward RPL3. Probably methylated on other residues.

Its subcellular location is the cytoplasm. The protein localises to the cytosol. It localises to the nucleus. It is found in the nucleolus. The catalysed reaction is L-histidyl-[protein] + S-adenosyl-L-methionine = N(tele)-methyl-L-histidyl-[protein] + S-adenosyl-L-homocysteine + H(+). Its function is as follows. Protein-L-histidine N-tele-methyltransferase that specifically monomethylates RPL3, thereby regulating translation elongation. Histidine methylation of RPL3 regulates translation elongation by slowing ribosome traversal on tyrosine codons: slower elongation provides enough time for proper folding of synthesized proteins and prevents cellular aggregation of tyrosine-rich proteins. The chain is Histidine protein methyltransferase 1 homolog from Homo sapiens (Human).